The following is a 500-amino-acid chain: Proline--tRNA ligase (500 aa).

This sequence belongs to the class-II aminoacyl-tRNA synthetase family. ProS type 3 subfamily. In terms of assembly, homodimer.

The protein resides in the cytoplasm. It carries out the reaction tRNA(Pro) + L-proline + ATP = L-prolyl-tRNA(Pro) + AMP + diphosphate. Catalyzes the attachment of proline to tRNA(Pro) in a two-step reaction: proline is first activated by ATP to form Pro-AMP and then transferred to the acceptor end of tRNA(Pro). This chain is Proline--tRNA ligase, found in Paramagnetospirillum magneticum (strain ATCC 700264 / AMB-1) (Magnetospirillum magneticum).